A 433-amino-acid chain; its full sequence is Signal recognition particle 54 kDa protein (433 aa).

GTP contacts are provided by residues 100 to 107 (GLQGSGKT), 180 to 184 (DTAGR), and 238 to 241 (TKFD).

This sequence belongs to the GTP-binding SRP family. SRP54 subfamily. In terms of assembly, part of the signal recognition particle protein translocation system, which is composed of SRP and FtsY. Archaeal SRP consists of a 7S RNA molecule of 300 nucleotides and two protein subunits: SRP54 and SRP19.

It localises to the cytoplasm. The enzyme catalyses GTP + H2O = GDP + phosphate + H(+). Its function is as follows. Involved in targeting and insertion of nascent membrane proteins into the cytoplasmic membrane. Binds to the hydrophobic signal sequence of the ribosome-nascent chain (RNC) as it emerges from the ribosomes. The SRP-RNC complex is then targeted to the cytoplasmic membrane where it interacts with the SRP receptor FtsY. The polypeptide is Signal recognition particle 54 kDa protein (Archaeoglobus fulgidus (strain ATCC 49558 / DSM 4304 / JCM 9628 / NBRC 100126 / VC-16)).